The following is a 118-amino-acid chain: Putative pterin-4-alpha-carbinolamine dehydratase (118 aa).

This sequence belongs to the pterin-4-alpha-carbinolamine dehydratase family.

It carries out the reaction (4aS,6R)-4a-hydroxy-L-erythro-5,6,7,8-tetrahydrobiopterin = (6R)-L-erythro-6,7-dihydrobiopterin + H2O. This is Putative pterin-4-alpha-carbinolamine dehydratase from Pseudomonas paraeruginosa (strain DSM 24068 / PA7) (Pseudomonas aeruginosa (strain PA7)).